Consider the following 559-residue polypeptide: Acetolactate synthase, catabolic (559 aa).

FAD contacts are provided by residues arginine 159, 263–284 (FNNQ…IGYS), and 304–323 (DVLP…LVGD). Aspartate 447 is a binding site for Mg(2+).

It belongs to the TPP enzyme family. In terms of assembly, homodimer.

It catalyses the reaction 2 pyruvate + H(+) = (2S)-2-acetolactate + CO2. It participates in polyol metabolism; (R,R)-butane-2,3-diol biosynthesis; (R,R)-butane-2,3-diol from pyruvate: step 1/3. The polypeptide is Acetolactate synthase, catabolic (budB) (Raoultella terrigena (Klebsiella terrigena)).